The primary structure comprises 85 residues: Kunitz-type serine protease inhibitor homolog beta-bungarotoxin B1 chain, major component (85 aa).

Positions 1–24 are cleaved as a signal peptide; it reads MSSGGLLLLLGLLTLCAELIPVSS. Positions 31 to 81 constitute a BPTI/Kunitz inhibitor domain; sequence CDKPPDKGNCGPVRRAFYYDTRLKTCKAFQYRGCNGNGNHFKTETLCRCEC. 3 cysteine pairs are disulfide-bonded: C31-C81, C40-C64, and C56-C77.

The protein belongs to the venom Kunitz-type family. Heterodimer; disulfide-linked. The A chains have phospholipase A2 activity and the B chains show homology with the basic protease inhibitors. In terms of tissue distribution, expressed by the venom gland.

It localises to the secreted. Beta-1-bungarotoxin is a presynaptic neurotoxin of the venom. The B chain is homologous to venom basic protease inhibitors but has no protease inhibitor activity and blocks voltage-gated potassium channels (Kv). The polypeptide is Kunitz-type serine protease inhibitor homolog beta-bungarotoxin B1 chain, major component (Bungarus multicinctus (Many-banded krait)).